Reading from the N-terminus, the 389-residue chain is Chalcone synthase (389 aa).

Residue Cys-164 is part of the active site.

Belongs to the thiolase-like superfamily. Chalcone/stilbene synthases family.

It carries out the reaction (E)-4-coumaroyl-CoA + 3 malonyl-CoA + 3 H(+) = 2',4,4',6'-tetrahydroxychalcone + 3 CO2 + 4 CoA. Its pathway is secondary metabolite biosynthesis; flavonoid biosynthesis. Functionally, the primary product of this enzyme is 4,2',4',6'-tetrahydroxychalcone (also termed naringenin-chalcone or chalcone) which can under specific conditions spontaneously isomerize into naringenin. This chain is Chalcone synthase (CHS1), found in Casuarina glauca (Swamp oak).